A 141-amino-acid polypeptide reads, in one-letter code: Large ribosomal subunit protein uL16 (141 aa).

A compositionally biased stretch (basic residues) spans 1–16; it reads MLMPRKPPKGFRKPHH. Residues 1 to 27 form a disordered region; it reads MLMPRKPPKGFRKPHHPDRSGASKGGN.

This sequence belongs to the universal ribosomal protein uL16 family. As to quaternary structure, part of the 50S ribosomal subunit.

In terms of biological role, binds 23S rRNA and is also seen to make contacts with the A and possibly P site tRNAs. In Salinispora arenicola (strain CNS-205), this protein is Large ribosomal subunit protein uL16.